A 388-amino-acid chain; its full sequence is Carbohydrate sulfotransferase 4 (388 aa).

Residues 1-7 (MMLLKKG) lie on the Cytoplasmic side of the membrane. The chain crosses the membrane as a helical; Signal-anchor for type II membrane protein span at residues 8-28 (RLLMFLGSQVIVVALFIHMSV). Over 29-388 (HRHLSQREES…HILGQVFREG (360 aa)) the chain is Lumenal. Residues 50–56 (WRSGSSF) and 204–212 (RDPRAVFRS) contribute to the 3'-phosphoadenylyl sulfate site. 3 N-linked (GlcNAc...) asparagine glycosylation sites follow: Asn-307, Asn-328, and Asn-369.

Belongs to the sulfotransferase 1 family. Gal/GlcNAc/GalNAc subfamily. In terms of assembly, monomer. In terms of tissue distribution, specifically expressed in high endothelial venules (HEV) of peripheral lymph nodes.

It is found in the golgi apparatus membrane. It carries out the reaction 3-O-{N-acetyl-beta-D-glucosaminyl-(1-&gt;3)-beta-D-galactosyl-(1-&gt;3)-N-acetyl-alpha-D-galactosaminyl}-L-threonyl-[protein] + 3'-phosphoadenylyl sulfate = 3-O-{6-O-sulfo-N-acetyl-beta-D-glucosaminyl-(1-&gt;3)-beta-D-galactosyl-(1-&gt;3)-N-acetyl-alpha-D-galactosaminyl}-L-threonyl-[protein] + adenosine 3',5'-bisphosphate + H(+). The enzyme catalyses 3-O-{N-acetyl-beta-D-glucosaminyl-(1-&gt;3)-beta-D-galactosyl-(1-&gt;3)-N-acetyl-alpha-D-galactosaminyl}-L-seryl-[protein] + 3'-phosphoadenylyl sulfate = 3-O-{6-O-sulfo-N-acetyl-beta-D-glucosaminyl-(1-&gt;3)-beta-D-galactosyl-(1-&gt;3)-N-acetyl-alpha-D-galactosaminyl}-L-seryl-[protein] + adenosine 3',5'-bisphosphate + H(+). It catalyses the reaction a 3-O-{beta-D-galactosyl-(1-&gt;3)-[N-acetyl-beta-D-glucosaminyl-(1-&gt;6)]-N-acetyl-alpha-D-galactosaminyl}-L-threonyl-[protein] + 3'-phosphoadenylyl sulfate = 3-O-{beta-D-galactosyl-(1-&gt;3)-[6-O-sulfo-N-acetyl-beta-D-glucosaminyl-(1-&gt;6)]-N-acetyl-alpha-D-galactosaminyl}-L-threonyl-[protein] + adenosine 3',5'-bisphosphate + H(+). The catalysed reaction is 3-O-{beta-D-galactosyl-(1-&gt;3)-[N-acetyl-beta-D-glucosaminyl-(1-&gt;6)]-N-acetyl-alpha-D-galactosaminyl}-L-seryl-[protein] + 3'-phosphoadenylyl sulfate = 3-O-{beta-D-galactosyl-(1-&gt;3)-[6-O-sulfo-N-acetyl-beta-D-glucosaminyl-(1-&gt;6)]-N-acetyl-alpha-D-galactosaminyl}-L-seryl-[protein] + adenosine 3',5'-bisphosphate + H(+). It functions in the pathway protein modification; carbohydrate sulfation. In terms of biological role, sulfotransferase involved in SELL/L-selectin ligand biosynthesis pathway. Catalyzes the transfer of the sulfate group from 3'-phospho-5'-adenylyl sulfate (PAPS) onto the hydroxyl group at C-6 position of the non-reducing N-acetylglucosamine (GlcNAc) residue within O-linked mucin-type glycans. Contributes to generate sialyl 6-sulfo Lewis X determinant (also known as MECA-79 epitope) for SELL recognition, a prerequisite for continuous lymphocyte homing into peripheral lymph nodes and antigen immune surveillance. Transfers the sulfate group primarily on core 2 GlcNAcbeta1-6(Galbeta1-3)GalNAcalphaSer/Thr and extended core 1 GlcNAcbeta1-3Galbeta1-3GalNAcalphaSer/Thr based O-linked glycans on CD34 and GLYCAM1 peripheral node addressins (PNAds) expressed on the lumenal side of high endothelial venules (HEVs). The recognition of PNAds by SELL initiates a multistep process comprising tethering and rolling of blood lymphocytes on HEVs against the blood flow, followed by chemokine signaling, integrin-mediated lymphocyte adhesion onto endothelial cells and lymphocyte transendothelial migration. Modulates rolling velocity and differential T and B lymphocyte recruitment into peripheral lymph nodes, with a major role in B lymphocyte homing. Might be redundant in sulfation of MADCAM1 and lymphocyte trafficking to mesenteric lymph nodes. Can also sulfonate core 3 GlcNAcbeta1-3GalNAc-R based glycans as well as GlcNAcbeta1-3Galbeta1-Glc, GlcNAcbeta1-6ManOMe and GlcNAcbeta1-2Man oligosaccharides, which might be ectopically expressed during tumorigenesis. The polypeptide is Carbohydrate sulfotransferase 4 (Chst4) (Mus musculus (Mouse)).